The chain runs to 348 residues: Phosphate acyltransferase (348 aa).

It belongs to the PlsX family. In terms of assembly, homodimer. Probably interacts with PlsY.

It localises to the cytoplasm. It catalyses the reaction a fatty acyl-[ACP] + phosphate = an acyl phosphate + holo-[ACP]. The protein operates within lipid metabolism; phospholipid metabolism. In terms of biological role, catalyzes the reversible formation of acyl-phosphate (acyl-PO(4)) from acyl-[acyl-carrier-protein] (acyl-ACP). This enzyme utilizes acyl-ACP as fatty acyl donor, but not acyl-CoA. This is Phosphate acyltransferase from Oenococcus oeni (strain ATCC BAA-331 / PSU-1).